We begin with the raw amino-acid sequence, 432 residues long: MADKLPYKVADIGLAAWGRKALDIAENEMPGLMRMREMYSASKPLKGARIAGCLHMTVETAVLIETLVALGAEVRWSSCNIFSTQDHAAAAIAKAGIPVFAWKGETDEEYLWCIEQTLHFKDGPLNMILDDGGDLTNLIHTKHPQLLSGIRGISEETTTGVHNLYKMMANGILKVPAINVNDSVTKSKFDNLYGCRESLIDGIKRATDVMIAGKVAVVAGYGDVGKGCAQALRGFGARVIITEIDPINALQAAMEGYEVTTMDEACKEGNIFVTTTGCVDIILGRHFEQMKDDAIVCNIGHFDVEIDVKWLNENAVEKVNIKPQVDRYLLKNGHRIILLAEGRLVNLGCAMGHPSFVMSNSFTNQVMAQIELWTHPDKYPVGVHFLPKKLDEAVAEAHLGKLNVKLTKLTEKQAQYLGMPINGPFKPDHYRY.

The substrate site is built by Thr57, Asp131, and Glu156. 157-159 (TTT) provides a ligand contact to NAD(+). Ser183 is modified (phosphoserine). Substrate is bound by residues Lys186 and Asp190. The residue at position 186 (Lys186) is an N6-(2-hydroxyisobutyryl)lysine. The residue at position 193 (Tyr193) is a Phosphotyrosine. NAD(+) contacts are provided by residues 222–227 (GDVGKG), Glu243, Asn248, 299–301 (IGH), Asn346, His353, Lys426, 426–430 (KPDHY), and Tyr430.

The protein belongs to the adenosylhomocysteinase family. As to quaternary structure, homotetramer. Interaction with AHCYL1. Requires NAD(+) as cofactor.

It is found in the cytoplasm. The protein localises to the melanosome. Its subcellular location is the nucleus. It localises to the endoplasmic reticulum. The catalysed reaction is S-adenosyl-L-homocysteine + H2O = L-homocysteine + adenosine. The protein operates within amino-acid biosynthesis; L-homocysteine biosynthesis; L-homocysteine from S-adenosyl-L-homocysteine: step 1/1. Functionally, catalyzes the hydrolysis of S-adenosyl-L-homocysteine to form adenosine and homocysteine. Binds copper ions. This is Adenosylhomocysteinase (Ahcy) from Rattus norvegicus (Rat).